A 152-amino-acid polypeptide reads, in one-letter code: Anti-CBASS protein Acb1 (152 aa).

Tyr12 is a binding site for 3',3'-cGAMP. Tyr12 serves as a coordination point for 3',3'-cUAMP. Active-site residues include His44, Thr46, His113, and Thr115. Residues Glu141 and Trp147 each coordinate 3',3'-cGAMP. 2 residues coordinate 3',3'-cUAMP: Glu141 and Trp147.

It belongs to the anti-CBASS protein Acb1 family.

It carries out the reaction 3',3'-cUAMP + H2O = U[3'-5']pAp[3'] + H(+). The catalysed reaction is 3',3',3'-c-tri-AMP + H2O = A[3'-5']pA[3'-5']pAp[3'] + H(+). The enzyme catalyses 3',3',3'-cAAG + H2O = G[3'-5']pA[3'-5']pAp[3'] + H(+). It catalyses the reaction 3',3',3'-cAAG + H2O = A[3'-5']pG[3'-5']pAp[3'] + H(+). It carries out the reaction 3',3'-cGAMP + H2O = G[3'-5']pAp[3'] + H(+). Functionally, counteracts the host CBASS antiviral system. Phosphodiesterase that enables metal-independent hydrolysis of the host cyclic di- and trinucleotide CBASS signals such as 3'3'-cGAMP, 3'3'cUA, and 3'3'3'-cAAA. Does not cleave cGG or cA4. Besides evasion of the CBASS system, might also enable evasion of the type III CRISPR systems that use cA3 signals. This is Anti-CBASS protein Acb1 (57B) from Escherichia coli (Bacteriophage T4).